The primary structure comprises 714 residues: Angiogenic factor with G patch and FHA domains 1 (714 aa).

Over residues 1-18 (MASEAPSPPRSPPPPTSP) the composition is skewed to pro residues. 3 disordered regions span residues 1 to 22 (MASE…EPEL), 259 to 307 (QPYP…HTSC), and 322 to 384 (IGIH…SYDE). At Ala2 the chain carries N-acetylalanine. A phosphoserine mark is found at Ser7 and Ser11. A coiled-coil region spans residues 18–88 (PEPELAQLRR…QRGRNEDNKK (71 aa)). Basic and acidic residues predominate over residues 279–298 (KDPDSSATNEEKDLNSEDQK). Over residues 335 to 355 (VPTSGNTIESPLHENISNSTS) the composition is skewed to polar residues. Residue Ser344 is modified to Phosphoserine. Positions 364 to 383 (TDSEPEEGEITDSQTEDSYD) are enriched in acidic residues. In terms of domain architecture, FHA spans 434 to 487 (ATIGREKDMEHTLRIPEVGVSKFHAEIYFDHDLQSYVLVDQGSQNGTIVNGKQI). A compositionally biased stretch (basic and acidic residues) spans 586–609 (KYKDRAGKRREQVGSEGTFQRDDA). 2 disordered regions span residues 586-617 (KYKD…HSEI) and 655-714 (RTHA…GTLE). The G-patch domain occupies 619-665 (DSNKGRKMLEKMGWKKGEGLGKDGGGMKTPIQLQLRRTHAGLGTGKP). N6-acetyllysine is present on Lys664. Over residues 680–690 (KNWDKARERFT) the composition is skewed to basic and acidic residues.

As to quaternary structure, interacts with the secreted angiogenic factor TNFSF12. As to expression, widely expressed. Expressed in endothelial cells, vascular smooth muscle cells and osteoblasts. Expressed in umbilical vein endothelial cells and microvascular endothelial cells.

The protein resides in the cytoplasm. It is found in the secreted. Promotes angiogenesis and the proliferation of endothelial cells. Able to bind to endothelial cells and promote cell proliferation, suggesting that it may act in an autocrine fashion. The sequence is that of Angiogenic factor with G patch and FHA domains 1 (AGGF1) from Homo sapiens (Human).